A 750-amino-acid chain; its full sequence is Photosystem I P700 chlorophyll a apoprotein A1 (750 aa).

8 helical membrane passes run 70–93 (VFSA…FHGA), 156–179 (LYCT…FHYH), 195–219 (LNHH…HVSL), 291–309 (IAHH…GHMY), 346–369 (WHAQ…HHMY), 385–411 (LSLF…IFMV), 433–455 (AIIS…LYIH), and 531–549 (FLVH…LILL). 2 residues coordinate [4Fe-4S] cluster: C573 and C582. Helical transmembrane passes span 589–610 (HVFL…HFSW) and 664–686 (LSAY…MFLF). H675 contributes to the chlorophyll a' binding site. 2 residues coordinate chlorophyll a: M683 and Y691. W692 is a phylloquinone binding site. The helical transmembrane segment at 724–744 (AVGVTHYLLGGIATTWAFFLA) threads the bilayer.

This sequence belongs to the PsaA/PsaB family. As to quaternary structure, the PsaA/B heterodimer binds the P700 chlorophyll special pair and subsequent electron acceptors. PSI consists of a core antenna complex that captures photons, and an electron transfer chain that converts photonic excitation into a charge separation. The eukaryotic PSI reaction center is composed of at least 11 subunits. Requires P700 is a chlorophyll a/chlorophyll a' dimer, A0 is one or more chlorophyll a, A1 is one or both phylloquinones and FX is a shared 4Fe-4S iron-sulfur center. as cofactor.

Its subcellular location is the plastid. It localises to the chloroplast thylakoid membrane. The enzyme catalyses reduced [plastocyanin] + hnu + oxidized [2Fe-2S]-[ferredoxin] = oxidized [plastocyanin] + reduced [2Fe-2S]-[ferredoxin]. In terms of biological role, psaA and PsaB bind P700, the primary electron donor of photosystem I (PSI), as well as the electron acceptors A0, A1 and FX. PSI is a plastocyanin-ferredoxin oxidoreductase, converting photonic excitation into a charge separation, which transfers an electron from the donor P700 chlorophyll pair to the spectroscopically characterized acceptors A0, A1, FX, FA and FB in turn. Oxidized P700 is reduced on the lumenal side of the thylakoid membrane by plastocyanin. The polypeptide is Photosystem I P700 chlorophyll a apoprotein A1 (Crucihimalaya wallichii (Rock-cress)).